The primary structure comprises 139 residues: Transcription antitermination protein NusB (139 aa).

The protein belongs to the NusB family.

Involved in transcription antitermination. Required for transcription of ribosomal RNA (rRNA) genes. Binds specifically to the boxA antiterminator sequence of the ribosomal RNA (rrn) operons. This chain is Transcription antitermination protein NusB, found in Edwardsiella ictaluri (strain 93-146).